The chain runs to 171 residues: Macro domain-containing protein RSc0334 (171 aa).

The Macro domain maps to 1–171; that stretch reads MPIPTVTLRA…LYETALNEAR (171 aa).

This sequence belongs to the MacroD-type family.

The protein is Macro domain-containing protein RSc0334 of Ralstonia nicotianae (strain ATCC BAA-1114 / GMI1000) (Ralstonia solanacearum).